The sequence spans 88 residues: Protein alpha-1 (88 aa).

The chain crosses the membrane as a helical span at residues 38-58 (GFWIILIILLGILAIRIAIKV).

The protein resides in the membrane. This chain is Protein alpha-1 (alpha), found in Bos taurus (Bovine).